Consider the following 225-residue polypeptide: UPF0758 protein BAMEG_4721 (225 aa).

The MPN domain occupies 103–225 (SIRSPEDCAT…FVSLKEKGHI (123 aa)). The Zn(2+) site is built by histidine 174, histidine 176, and aspartate 187. The JAMM motif motif lies at 174–187 (HNHPSGDPAPSRED).

It belongs to the UPF0758 family.

The sequence is that of UPF0758 protein BAMEG_4721 from Bacillus anthracis (strain CDC 684 / NRRL 3495).